The following is a 157-amino-acid chain: Small ribosomal subunit protein uS7 (157 aa).

It belongs to the universal ribosomal protein uS7 family. Part of the 30S ribosomal subunit. Contacts proteins S9 and S11.

One of the primary rRNA binding proteins, it binds directly to 16S rRNA where it nucleates assembly of the head domain of the 30S subunit. Is located at the subunit interface close to the decoding center, probably blocks exit of the E-site tRNA. In Opitutus terrae (strain DSM 11246 / JCM 15787 / PB90-1), this protein is Small ribosomal subunit protein uS7.